We begin with the raw amino-acid sequence, 2641 residues long: Inverse autotransporter adhesin YeeJ (2641 aa).

The first 26 residues, 1 to 26, serve as a signal peptide directing secretion; sequence MGIKLRRLTAGICLVTQLAFPMAAAA. Positions 50–98 constitute a LysM domain; sequence VPYILGALESAQSVAERFGISVAELRKLNQFRTFARGFDNVRQGDELDV. The interval 99-118 is disordered; the sequence is PAQVSEKKLTPPPGNSSDNL. The inverse autotransporter stretch occupies residues 125–400; it reads TSQQIGSLLA…SRYDLVDRNN (276 aa). The interval 513–605 is invasin 3 domain; sequence QKDSSVSLST…GVDAAKAPAV (93 aa). Big-1 domains follow at residues 617-711, 721-815, 822-913, 920-1017, 1024-1116, 1123-1220, 1227-1319, 1326-1423, 1430-1523, 1531-1633, 1641-1734, 1741-1837, 1844-1941, 1948-2032, 2048-2139, 2142-2236, and 2244-2336; these read HSSI…AGFI, IATL…VSFV, QVDL…VNFI, ALTL…MTFV, VVVL…VNIA, QVTL…VTFV, QVVL…VHFI, IIEL…SINV, HLTL…VTYV, EISL…VNFT, QVNL…VTLI, KLTS…PTEV, FTSL…LEAI, KLTL…VKVT, and VASF…ITLV. Residues 2538–2641 form a C-type lectin domain region; the sequence is KSWWVNAGDA…FAHATCYKNL (104 aa).

This sequence belongs to the intimin/invasin family.

The protein localises to the cell outer membrane. Its function is as follows. A probable inverse autotransporter, it may be involved in biofilm formation and cell adhesion. May bind peptidoglycan via its LysM domain. Upon overexpression shows increased mature biofilm formation. The polypeptide is Inverse autotransporter adhesin YeeJ (Escherichia coli O17:K52:H18 (strain UMN026 / ExPEC)).